The chain runs to 223 residues: MAIYKVALLLLFGMILLASDFEHAKACTKECDTRIDFGICPLLETKRVEGLCTNCCAGKKGCKYFSKDGTYICDGESEWVSEKNNNLKKACTKECDTRIDFGICPLLETKRVEGLCTNCCAGKKGCKYFSKDGTYICDGESEWVSEKDNNLEKDCTKECDTRIDFGICPLLETKRVKGLCTNCCAGKKGCKYFSADGTYICDGESEWVSEGENDLQKSNVAIS.

The first 24 residues, 1–24 (MAIYKVALLLLFGMILLASDFEHA), serve as a signal peptide directing secretion. 3 repeat units span residues 24-81 (AKAC…EWVS), 88-145 (KKAC…EWVS), and 152-209 (EKDC…EWVS). 8 disulfides stabilise this stretch: cysteine 27/cysteine 120, cysteine 31/cysteine 116, cysteine 40/cysteine 126, cysteine 52/cysteine 95, cysteine 55/cysteine 73, cysteine 56/cysteine 91, cysteine 62/cysteine 104, and cysteine 119/cysteine 137.

The protein belongs to the protease inhibitor I20 (potato type II proteinase inhibitor) family.

This chain is Proteinase inhibitor type-2 TR8 (ARPI), found in Solanum lycopersicum (Tomato).